A 257-amino-acid chain; its full sequence is 1-(5-phosphoribosyl)-5-[(5-phosphoribosylamino)methylideneamino] imidazole-4-carboxamide isomerase (257 aa).

The active-site Proton acceptor is aspartate 8. The active-site Proton donor is the aspartate 129.

The protein belongs to the HisA/HisF family.

The protein localises to the cytoplasm. The enzyme catalyses 1-(5-phospho-beta-D-ribosyl)-5-[(5-phospho-beta-D-ribosylamino)methylideneamino]imidazole-4-carboxamide = 5-[(5-phospho-1-deoxy-D-ribulos-1-ylimino)methylamino]-1-(5-phospho-beta-D-ribosyl)imidazole-4-carboxamide. Its pathway is amino-acid biosynthesis; L-histidine biosynthesis; L-histidine from 5-phospho-alpha-D-ribose 1-diphosphate: step 4/9. In Thermosynechococcus vestitus (strain NIES-2133 / IAM M-273 / BP-1), this protein is 1-(5-phosphoribosyl)-5-[(5-phosphoribosylamino)methylideneamino] imidazole-4-carboxamide isomerase.